A 670-amino-acid polypeptide reads, in one-letter code: Probable urocanate hydratase (670 aa).

Residues 126–127 (GG), glutamine 204, 250–252 (GMS), glutamate 270, 316–317 (NV), 338–342 (QTSLH), 349–350 (FY), tyrosine 398, and glycine 590 each bind NAD(+).

Belongs to the urocanase family. NAD(+) is required as a cofactor.

It catalyses the reaction 4-imidazolone-5-propanoate = trans-urocanate + H2O. The protein operates within amino-acid degradation; L-histidine degradation into L-glutamate; N-formimidoyl-L-glutamate from L-histidine: step 2/3. The sequence is that of Probable urocanate hydratase from Caenorhabditis elegans.